A 299-amino-acid chain; its full sequence is Cytosolic sulfotransferase 1 (299 aa).

51 to 56 (KAGTTW) contributes to the 3'-phosphoadenylyl sulfate binding site. Catalysis depends on H113, which acts as the Proton acceptor. Residues R135, S143, Y199, 233–238 (VQFDAM), and 261–263 (RKG) each bind 3'-phosphoadenylyl sulfate.

This sequence belongs to the sulfotransferase 1 family. In terms of tissue distribution, expressed in liver.

It localises to the cytoplasm. Inhibited by Co(2+), Zn(2+), Cd(2+) and Pb(2+) ions. Inactivated by Hg(2+) and Cu(2+) ions. Sulfotransferase that utilizes 3'-phospho-5'-adenylyl sulfate (PAPS) as sulfonate donor to catalyze the sulfate conjugation of a variety of xenobiotic and endogenous compounds, including 2-naphthol, hydroxychlorobiphenyls, dopamine and T3 (triiodo-L-thyronine). This chain is Cytosolic sulfotransferase 1, found in Danio rerio (Zebrafish).